A 390-amino-acid polypeptide reads, in one-letter code: Lissencephaly-1 homolog (390 aa).

Residues 7–39 form the LisH domain; that stretch reads QREEINRAVAEYLQNNGYSEAFNMLLKEASLSE. The stretch at 54–80 forms a coiled coil; that stretch reads TTVLRLQRKVNDLEAKLLESQQEINHG. WD repeat units lie at residues 104–145, 146–185, 189–228, 231–270, 272–313, 316–355, and 358–390; these read GHRL…KTLK, GHTDAVNDIAIDAAGKQLVSCSTDLTIKLWDFGQSYDCLK, GHEHTVSSVTFLPTGDFVLSASRDHTIKQWDISTGYCVFT, GHNDWVRMIRISHDGTLFASGSLDQTVSVWSLPRKQRNWY, EIMS…VIFT, AHENWVRGLAFHPKGKYLVSVADDKMMRIWELSAQRCMKA, and AHEHFVSTVAFHQTNPYVITGSVDMSCKVWECR.

This sequence belongs to the WD repeat LIS1/nudF family.

Its subcellular location is the cytoplasm. It is found in the cytoskeleton. The protein resides in the microtubule organizing center. The protein localises to the centrosome. Positively regulates the activity of the minus-end directed microtubule motor protein dynein. May enhance dynein-mediated microtubule sliding by targeting dynein to the microtubule plus end. Required for several dynein- and microtubule-dependent processes. This chain is Lissencephaly-1 homolog, found in Caenorhabditis briggsae.